The chain runs to 374 residues: PqqA peptide cyclase (374 aa).

A Radical SAM core domain is found at 13 to 230 (VPAPIAMLAE…EAEARLRGTL (218 aa)). The [4Fe-4S] cluster site is built by cysteine 27, cysteine 31, and cysteine 34.

Belongs to the radical SAM superfamily. PqqE family. In terms of assembly, interacts with PqqD. The interaction is necessary for activity of PqqE. The cofactor is [4Fe-4S] cluster.

It carries out the reaction [PQQ precursor protein] + S-adenosyl-L-methionine = E-Y cross-linked-[PQQ precursor protein] + 5'-deoxyadenosine + L-methionine + H(+). It participates in cofactor biosynthesis; pyrroloquinoline quinone biosynthesis. Catalyzes the cross-linking of a glutamate residue and a tyrosine residue in the PqqA protein as part of the biosynthesis of pyrroloquinoline quinone (PQQ). This chain is PqqA peptide cyclase, found in Ruegeria pomeroyi (strain ATCC 700808 / DSM 15171 / DSS-3) (Silicibacter pomeroyi).